Reading from the N-terminus, the 180-residue chain is Large ribosomal subunit protein uL5 (180 aa).

This sequence belongs to the universal ribosomal protein uL5 family. As to quaternary structure, part of the 50S ribosomal subunit; part of the 5S rRNA/L5/L18/L25 subcomplex. Contacts the 5S rRNA and the P site tRNA. Forms a bridge to the 30S subunit in the 70S ribosome.

This is one of the proteins that bind and probably mediate the attachment of the 5S RNA into the large ribosomal subunit, where it forms part of the central protuberance. In the 70S ribosome it contacts protein S13 of the 30S subunit (bridge B1b), connecting the 2 subunits; this bridge is implicated in subunit movement. Contacts the P site tRNA; the 5S rRNA and some of its associated proteins might help stabilize positioning of ribosome-bound tRNAs. This chain is Large ribosomal subunit protein uL5, found in Mycoplasma capricolum subsp. capricolum (strain California kid / ATCC 27343 / NCTC 10154).